The primary structure comprises 264 residues: Ribosomal protein L11 methyltransferase (264 aa).

S-adenosyl-L-methionine is bound by residues T116, G137, D159, and N200.

Belongs to the methyltransferase superfamily. PrmA family.

The protein resides in the cytoplasm. The catalysed reaction is L-lysyl-[protein] + 3 S-adenosyl-L-methionine = N(6),N(6),N(6)-trimethyl-L-lysyl-[protein] + 3 S-adenosyl-L-homocysteine + 3 H(+). Methylates ribosomal protein L11. This is Ribosomal protein L11 methyltransferase from Thermotoga neapolitana (strain ATCC 49049 / DSM 4359 / NBRC 107923 / NS-E).